A 475-amino-acid chain; its full sequence is uncharacterized protein (475 aa).

To E.coli YihN.

This is an uncharacterized protein from Mycoplasma pneumoniae (strain ATCC 29342 / M129 / Subtype 1) (Mycoplasmoides pneumoniae).